We begin with the raw amino-acid sequence, 719 residues long: Glutathionylspermidine synthase (719 aa).

A Peptidase C51 domain is found at 54–200 (CLPLSSFERK…TESGEVELLD (147 aa)). A glutathione-binding site is contributed by R350. An ATP-binding site is contributed by 350-352 (RFD). Residues D352, E364, and N366 each contribute to the Mg(2+) site. S369 lines the glutathione pocket. E432 is a spermidine binding site. 2 residues coordinate glutathione: E433 and T501. ATP contacts are provided by residues K544, K579, G586, Q653, and 689–691 (KIT).

The protein in the C-terminal section; belongs to the glutathionylspermidine synthase preATP-grasp family. The cofactor is Mg(2+). The N-terminus is blocked.

It catalyses the reaction spermidine + glutathione + ATP = glutathionylspermidine + ADP + phosphate + H(+). Conjugates glutathione (gamma-Glu-Cys-Gly) and spermidine to form glutathionylspermidine in the biosynthesis trypanothione (N(1),N(8)-bis(glutathionyl)spermidine), which is involved in maintaining intracellular thiol redox and in defense against oxidants. In Crithidia fasciculata, this protein is Glutathionylspermidine synthase (GSP).